Here is a 184-residue protein sequence, read N- to C-terminus: uncharacterized protein (184 aa).

The tract at residues 32–52 (PCPRSRTQGQSRRSETHTISR) is disordered.

The protein localises to the mitochondrion. This is an uncharacterized protein from Arabidopsis thaliana (Mouse-ear cress).